The primary structure comprises 846 residues: cGMP-dependent protein kinase (846 aa).

The segment at 1–22 is autoinhibitory segment; that stretch reads MRCNERNKKKAIFSNDDFSGED. 4 cNMP-binding domain regions span residues 51 to 166, 169 to 268, 288 to 391, and 411 to 510; these read VCST…FIDS, VFDM…IVLG, IFRQ…LGDN, and IFRY…LQII. The 3',5'-cyclic GMP site is built by lysine 106, glycine 115, glutamate 116, alanine 118, arginine 125, and serine 126. Residues arginine 466, glycine 475, glutamate 476, alanine 478, arginine 485, and threonine 486 each coordinate 3',5'-cyclic GMP. The region spanning 534 to 791 is the Protein kinase domain; the sequence is LETERIIGRG…FKDIKEHAFF (258 aa). Residues 540–548 and lysine 563 each bind ATP; that span reads IGRGTFGTV. Aspartate 657 functions as the Proton acceptor in the catalytic mechanism. The region spanning 792-846 is the AGC-kinase C-terminal domain; it reads GNFNWDKLAGRLLEPPLVSKGETYAEDIDIKQIEEEDALNEGEPLDGDDSWDVDF. The segment at 824–846 is disordered; it reads IEEEDALNEGEPLDGDDSWDVDF. Residues 825–846 show a composition bias toward acidic residues; that stretch reads EEEDALNEGEPLDGDDSWDVDF.

The protein belongs to the protein kinase superfamily. AGC Ser/Thr protein kinase family. cGMP subfamily. In terms of assembly, monomer. It depends on Mg(2+) as a cofactor. Post-translationally, autophosphorylated.

It is found in the cytoplasm. The protein localises to the endoplasmic reticulum membrane. It catalyses the reaction L-seryl-[protein] + ATP = O-phospho-L-seryl-[protein] + ADP + H(+). It carries out the reaction L-threonyl-[protein] + ATP = O-phospho-L-threonyl-[protein] + ADP + H(+). Activated by cGMP. Not activated by cAMP. cGMP binding allosterically triggers a conformational change at the alpha C-helix of cGMP-binding domain 4, which bridges the regulatory and catalytic domains, causing the capping triad, composed of Arg-477, Gln-525 and Asp-526, to form and stabilize the active conformation. The cGMP-binding domains acts cooperatively to activate PKG. Its function is as follows. Serine/threonine protein kinase which acts as a downstream effector of the second messenger cGMP. Controls the release of Ca(2+) from intracellular stores by regulating phosphoinositide biosynthesis. Ca(2+) signals are essential for merozoite and sporozoite invasion and egress from host hepatocytes and erythrocytes, and, in the mosquito vector, for gametocyte activation, and ookinete and sporozoite motility. During the host liver stage, regulates the initial invasion of host hepatocytes by sporozoites by regulating sporozoite motility and microneme exocytosis. Following parasite development in the hepatocytes, required for the release of merosomes, a vesicle containing the mature merozoites. During the asexual blood stage, required for the progression from schizont to the ring stage following merozoite invasion of host erythrocytes and for merozoite egress. Regulates merozoite egress by promoting the release of exonemes and micronemes which contain proteins essential for egress. Phosphorylates CDPK1 predominantly at the late schizont stage; phosphorylation at 'Ser-64' regulates CDPK1 protein-protein interaction and phosphorylation at 'Thr-231' may regulate CDPK1 kinase activity. In the mosquito vector, required for the initiation of gametogenesis induced by xanthurenic acid, specifically the gametocyte differentiation from the crescent-shaped form to the spherical form. Required for the gliding motility of ookinetes to reach and penetrate the midgut epithelium by promoting Ca(2+)-mediated activation of CDPK1 and CDPK4. Also required for microneme secretion in ookinete by promoting Ca(2+)-mediated activation of CDPK3. The chain is cGMP-dependent protein kinase from Plasmodium vivax (strain Salvador I).